The following is a 161-amino-acid chain: Fatty acid-binding protein homolog 2 (161 aa).

The first 19 residues, 1-19, serve as a signal peptide directing secretion; that stretch reads MSSKFLILLAFCGATLVAA.

This sequence belongs to the calycin superfamily. Fatty-acid binding protein (FABP) family.

It localises to the secreted. Functionally, may play a role in sequestering potentially toxic fatty acids and their peroxidation products, or it may be involved in the maintenance of the impermeable lipid layer of the eggshell. This is Fatty acid-binding protein homolog 2 (lbp-2) from Caenorhabditis elegans.